The chain runs to 170 residues: F107 fimbrial protein (170 aa).

The signal sequence occupies residues 1–21 (MKRLVFISFVALSMTAGSAMA). Cys-37 and Cys-78 form a disulfide bridge.

Belongs to the fimbrial protein family.

It localises to the fimbrium. Its function is as follows. Fimbriae (also called pili), polar filaments radiating from the surface of the bacterium to a length of 0.5-1.5 micrometers and numbering 100-300 per cell, enable bacteria to colonize the epithelium of specific host organs. This is F107 fimbrial protein (fedA) from Escherichia coli.